We begin with the raw amino-acid sequence, 166 residues long: Peptide deformylase (166 aa).

Fe cation is bound by residues C88 and H130. Residue E131 is part of the active site. H134 is a binding site for Fe cation.

Belongs to the polypeptide deformylase family. Requires Fe(2+) as cofactor.

The enzyme catalyses N-terminal N-formyl-L-methionyl-[peptide] + H2O = N-terminal L-methionyl-[peptide] + formate. Functionally, removes the formyl group from the N-terminal Met of newly synthesized proteins. Requires at least a dipeptide for an efficient rate of reaction. N-terminal L-methionine is a prerequisite for activity but the enzyme has broad specificity at other positions. This chain is Peptide deformylase, found in Caldicellulosiruptor bescii (strain ATCC BAA-1888 / DSM 6725 / KCTC 15123 / Z-1320) (Anaerocellum thermophilum).